The sequence spans 261 residues: Lysosome-associated membrane glycoprotein 5 (261 aa).

A signal peptide spans 1–29; the sequence is MDLQGRAVPSVDRLRVLLMLFHTMAQIMA. The Extracellular segment spans residues 30-234; that stretch reads EQEVENLSGL…AVDEREQLEE (205 aa). N-linked (GlcNAc...) asparagine glycosylation is found at N35, N53, and N126. A helical membrane pass occupies residues 235 to 255; sequence TLPLILGLILGLVIVVTLAIY. Over 256 to 261 the chain is Cytoplasmic; it reads HVHPQK.

This sequence belongs to the LAMP family. In terms of processing, glycosylated.

The protein resides in the cytoplasmic vesicle membrane. Its subcellular location is the cell membrane. It localises to the cell projection. The protein localises to the dendrite. It is found in the cytoplasmic vesicle. The protein resides in the secretory vesicle. Its subcellular location is the synaptic vesicle membrane. It localises to the growth cone membrane. The protein localises to the early endosome membrane. It is found in the recycling endosome. The protein resides in the endoplasmic reticulum-Golgi intermediate compartment membrane. Its subcellular location is the endosome membrane. Plays a role in short-term synaptic plasticity in a subset of GABAergic neurons in the brain. This Pongo abelii (Sumatran orangutan) protein is Lysosome-associated membrane glycoprotein 5 (LAMP5).